The following is a 132-amino-acid chain: Small ribosomal subunit protein uS8 (132 aa).

Belongs to the universal ribosomal protein uS8 family. Part of the 30S ribosomal subunit. Contacts proteins S5 and S12.

In terms of biological role, one of the primary rRNA binding proteins, it binds directly to 16S rRNA central domain where it helps coordinate assembly of the platform of the 30S subunit. This is Small ribosomal subunit protein uS8 from Clostridium perfringens (strain ATCC 13124 / DSM 756 / JCM 1290 / NCIMB 6125 / NCTC 8237 / Type A).